Here is a 446-residue protein sequence, read N- to C-terminus: MTEQKKKLEKLSGVKGMNDILPQEAGLWEFFETTVKSMLRSYGYQNIRTPIIEHTQLFKRGIGEVTDIVEKEMYSFTDALNGENLTMRPENTAAVVRAAIEHNMLYDGPKRLWYIGPMFRHERPQRGRYRQFHQVGVEALGFAGPDADAEIIMMCQRLWDDLGLMGIKLELNSLGLAHERAAHRVELIAYLEKHMDVLDEEAKRRLYTNPLRVLDTKNPAMQEVAQNAPKLIDFLGEESRAHFEGLQRILKANNIPFTINQRLVRGLDYYNLTVFEWVTDKLGAQGTVAAGGRYDPLIEQLGGKPTAACGWAMGIERILELLKEEQLVPEDEGCDVYVVHQGEAAREQAFIIAERLRDTGLDVILHCSADGQTASFKSQMKRADASGAAFAVVLGEDEIANGTVGVKPLRDTNADGGKNEQHNVPAEDLTEFLINAMVATAEDGDD.

It belongs to the class-II aminoacyl-tRNA synthetase family. As to quaternary structure, homodimer.

The protein localises to the cytoplasm. The catalysed reaction is tRNA(His) + L-histidine + ATP = L-histidyl-tRNA(His) + AMP + diphosphate + H(+). The chain is Histidine--tRNA ligase from Paraburkholderia xenovorans (strain LB400).